We begin with the raw amino-acid sequence, 1504 residues long: DNA polymerase zeta catalytic subunit (1504 aa).

Residues Cys1398, Cys1401, Cys1414, and Cys1417 each coordinate Zn(2+). The CysA-type zinc-finger motif lies at 1398–1417; it reads CCNCGEELTKICSLQLCDDC. Positions 1446, 1449, 1468, and 1473 each coordinate [4Fe-4S] cluster. Residues 1446–1473 carry the CysB motif motif; the sequence is CRTCSYRYTSDAGIENDHIASKCNSYDC.

It belongs to the DNA polymerase type-B family. Forms DNA polymerase zeta with REV7. [4Fe-4S] cluster is required as a cofactor.

It is found in the mitochondrion. It localises to the nucleus. It catalyses the reaction DNA(n) + a 2'-deoxyribonucleoside 5'-triphosphate = DNA(n+1) + diphosphate. Nonessential DNA polymerase. Required for DNA damage induced mutagenesis. Involved in DNA repair, mitochondrial DNA repair and translesion synthesis. Translesion synthesis in S.cerevisiae may use a specialized DNA polymerase that is not required for other DNA replicative processes. Has a role in the bypass of abasic (AP) sites. Highly inefficient in incorporating nucleotides opposite the AP site, but efficiently extends from nucleotides, particularly an A, inserted opposite the lesion. The sequence is that of DNA polymerase zeta catalytic subunit (REV3) from Saccharomyces cerevisiae (strain ATCC 204508 / S288c) (Baker's yeast).